Here is a 703-residue protein sequence, read N- to C-terminus: Cyclomaltodextrin glucanotransferase (703 aa).

An N-terminal signal peptide occupies residues 1–29; that stretch reads MNDLNDFLKTILLSFIFFLLLSLPTVAEA. Residues 30–160 form an A1 region; sequence DVTNKVNYSK…GIKVIMDFTP (131 aa). Residues D52, N54, N57, and N58 each coordinate Ca(2+). C68 and C75 are oxidised to a cystine. Residues G76 and D78 each contribute to the Ca(2+) site. 122 to 123 is a substrate binding site; sequence YW. N161 contacts Ca(2+). The b stretch occupies residues 161 to 224; that stretch reads NHSSPALETN…NLYDLADYDL (64 aa). A substrate-binding site is contributed by H162. Residue I212 participates in Ca(2+) binding. 215–218 is a binding site for substrate; sequence NLYD. D221 is a Ca(2+) binding site. The segment at 225–428 is A2; sequence NNTVMDQYLK…LRQTNSALGY (204 aa). R249 lines the substrate pocket. The active-site Nucleophile is the D251. Residue 254 to 255 participates in substrate binding; sequence KH. H255 is a Ca(2+) binding site. E279 acts as the Proton donor in catalysis. The substrate site is built by H349, D393, and R397. The segment at 429 to 516 is c; the sequence is GTTTERWLNE…SVAVWQVSNP (88 aa). A d region spans residues 517 to 600; that stretch reads STSPLIGQVG…SPTYKEFEVL (84 aa). Residues 520–598 enclose the IPT/TIG domain; sequence PLIGQVGPMM…IKSPTYKEFE (79 aa). The CBM20 domain occupies 599–703; that stretch reads VLSGNQVSVR…TGTDTVMINW (105 aa). The tract at residues 601-703 is e; it reads SGNQVSVRFG…TGTDTVMINW (103 aa).

The protein belongs to the glycosyl hydrolase 13 family. As to quaternary structure, monomer. Requires Ca(2+) as cofactor.

It localises to the secreted. The enzyme catalyses Cyclizes part of a (1-&gt;4)-alpha-D-glucan chain by formation of a (1-&gt;4)-alpha-D-glucosidic bond.. This Bacillus sp. (strain 1-1) protein is Cyclomaltodextrin glucanotransferase (cgt).